A 124-amino-acid polypeptide reads, in one-letter code: Small ribosomal subunit protein uS12 (124 aa).

Asp-89 bears the 3-methylthioaspartic acid mark.

The protein belongs to the universal ribosomal protein uS12 family. Part of the 30S ribosomal subunit. Contacts proteins S8 and S17. May interact with IF1 in the 30S initiation complex.

With S4 and S5 plays an important role in translational accuracy. Its function is as follows. Interacts with and stabilizes bases of the 16S rRNA that are involved in tRNA selection in the A site and with the mRNA backbone. Located at the interface of the 30S and 50S subunits, it traverses the body of the 30S subunit contacting proteins on the other side and probably holding the rRNA structure together. The combined cluster of proteins S8, S12 and S17 appears to hold together the shoulder and platform of the 30S subunit. This Treponema pallidum subsp. pallidum (strain SS14) protein is Small ribosomal subunit protein uS12.